The chain runs to 880 residues: Alanine--tRNA ligase (880 aa).

4 residues coordinate Zn(2+): H567, H571, C669, and H673.

Belongs to the class-II aminoacyl-tRNA synthetase family. Zn(2+) is required as a cofactor.

Its subcellular location is the cytoplasm. It carries out the reaction tRNA(Ala) + L-alanine + ATP = L-alanyl-tRNA(Ala) + AMP + diphosphate. Its function is as follows. Catalyzes the attachment of alanine to tRNA(Ala) in a two-step reaction: alanine is first activated by ATP to form Ala-AMP and then transferred to the acceptor end of tRNA(Ala). Also edits incorrectly charged Ser-tRNA(Ala) and Gly-tRNA(Ala) via its editing domain. The sequence is that of Alanine--tRNA ligase from Bacillus thuringiensis (strain Al Hakam).